The chain runs to 186 residues: PR-toxin biosynthesis cluster protein 7 (186 aa).

A helical transmembrane segment spans residues 24–43; it reads LGEVTTGGVTPRGTFIFCPI.

It localises to the membrane. The protein operates within sesquiterpene biosynthesis. In terms of biological role, part of the gene cluster that mediates the biosynthesis of PR-toxin, a bicyclic sesquiterpene belonging to the eremophilane class and acting as a mycotoxin. The first step of the pathway is catalyzed by the aristolochene synthase which performs the cyclization of trans,trans-farnesyl diphosphate (FPP) to the bicyclic sesquiterpene aristolochene. Following the formation of aristolochene, the non-oxygenated aristolochene is converted to the trioxygenated intermediate eremofortin B, via 7-epi-neopetasone. This conversion appears to involve three enzymes, a hydroxysterol oxidase-like enzyme, the quinone-oxidase prx3 that forms the quinone-type-structure in the bicyclic nucleus of aristolochene with the C8-oxo group and the C-3 hydroxyl group, and the P450 monooxygenase ORF6 that introduces the epoxide at the double bond between carbons 1 and 2. No monoxy or dioxy-intermediates have been reported to be released to the broth, so these three early oxidative reactions may be coupled together. Eremofortin B is further oxidized by another P450 monooxygenase, that introduces a second epoxide between carbons 7 and 11 prior to acetylation to eremofortin A by the acetyltransferase ORF8. The second epoxidation may be performed by a second P450 monooxygenase. After the acetylation step, eremofortin A is converted to eremofortin C and then to PR-toxin. First the conversion of eremofortin A to eremofortin C proceeds by oxidation of the side chain of the molecule at C-12 and is catalyzed by the short-chain oxidoreductase prx1. The cytochrome P450 monooxygenase ORF6 is probably also involved in this step. The primary alcohol formed at C-12 is finally oxidized by the short-chain alcohol dehydrogenase prx4 that forms PR-toxin. The sequence is that of PR-toxin biosynthesis cluster protein 7 from Penicillium roqueforti (strain FM164).